Here is a 117-residue protein sequence, read N- to C-terminus: DNA-directed RNA polymerase subunit omega (117 aa).

The protein belongs to the RNA polymerase subunit omega family. In terms of assembly, the RNAP catalytic core consists of 2 alpha, 1 beta, 1 beta' and 1 omega subunit. When a sigma factor is associated with the core the holoenzyme is formed, which can initiate transcription.

The catalysed reaction is RNA(n) + a ribonucleoside 5'-triphosphate = RNA(n+1) + diphosphate. Functionally, promotes RNA polymerase assembly. Latches the N- and C-terminal regions of the beta' subunit thereby facilitating its interaction with the beta and alpha subunits. This Cereibacter sphaeroides (strain ATCC 17025 / ATH 2.4.3) (Rhodobacter sphaeroides) protein is DNA-directed RNA polymerase subunit omega.